The following is a 143-amino-acid chain: 5-hydroxymethyl-dUMP N-hydrolase (143 aa).

5-hydroxymethyl-dUMP contacts are provided by glycine 7, isoleucine 9, arginine 10, glycine 11, serine 77, glycine 79, glutamate 83, and serine 107.

This sequence belongs to the 2'-deoxynucleoside 5'-phosphate N-hydrolase 1 family. As to quaternary structure, monomer and homodimer.

Its subcellular location is the cytoplasm. The protein localises to the nucleus. The catalysed reaction is 5-hydroxymethyl-dUMP + H2O = 5-hydroxymethyluracil + 2-deoxy-D-ribose 5-phosphate. Functionally, part of a nucleotide salvage pathway that eliminates epigenetically modified 5-hydroxymethyl-dCMP (hmdCMP) in a two-step process entailing deamination to cytotoxic 5-hydroxymethyl-dUMP (hmdUMP), followed by its hydrolysis into 5-hydroxymethyluracil (hmU) and 2-deoxy-D-ribose 5-phosphate (deoxyribosephosphate). The protein is 5-hydroxymethyl-dUMP N-hydrolase (dnph1) of Danio rerio (Zebrafish).